The sequence spans 129 residues: Large ribosomal subunit protein bL17 (129 aa).

This sequence belongs to the bacterial ribosomal protein bL17 family. As to quaternary structure, part of the 50S ribosomal subunit. Contacts protein L32.

This chain is Large ribosomal subunit protein bL17, found in Desulfotalea psychrophila (strain LSv54 / DSM 12343).